The sequence spans 625 residues: MVRAALVTATSLALTGAVVAHAYFLKHQFYPTVVYLTKSSPSMAVLYIQAFVLVFLLGKLMRKVFFGQLRAAEMEHLIERSWYAVTETCLAFTVFRDDFSPRFVALFTLLLFLKCFHWLAEDRVDFMERSPNISWVFHFRVLSLMVLLGVMDFLFVNHACHSIITRGASVQLVFGFEYAILMTMVLTTFIKYTLHTIDLQSENPWDNKAVYMLYTELFTGFIKVLLYMAFMTIMIKVHTFPLFAIRPMYLAMRQFKKAVTDAIMSRRAIRNMNTLYPDATPEDLQATDNVCIICREEMVTGAKKLPCNHIFHSSCLRSWFQRQQTCPTCRMDVLRASQPNQTPAPPAAQAPAPPAPANAPIPPPVNVAPGMIPQFPPGLFPFWGPFPGAPPPAVPGAPAAPTDTPQPSSDGAQGAESGAGGLAQSTAEAASAAPGAMPGFPFTMPPPFPSAPWLPMPPPPPFMSSMPPPPSSLSSMSEAELRELEQEGRRGLEARLQCLHNIHTLLDAAMLNIHHYLSTVATLSPPRSETNTGETSESANVESSPSTANTETAGQEIQSQSGESINGAAGFSQPDSTTEGEKDVKEEDEDDGEPSAAELRRRRLRKLETTNTPDHGNLLKLASVN.

The Cytoplasmic segment spans residues 1-4 (MVRA). Residues 5–25 (ALVTATSLALTGAVVAHAYFL) form a helical membrane-spanning segment. Residues 26 to 40 (KHQFYPTVVYLTKSS) lie on the Lumenal side of the membrane. A helical transmembrane segment spans residues 41 to 61 (PSMAVLYIQAFVLVFLLGKLM). Topologically, residues 62-98 (RKVFFGQLRAAEMEHLIERSWYAVTETCLAFTVFRDD) are cytoplasmic. A helical transmembrane segment spans residues 99–119 (FSPRFVALFTLLLFLKCFHWL). Over 120-135 (AEDRVDFMERSPNISW) the chain is Lumenal. Residues 136–156 (VFHFRVLSLMVLLGVMDFLFV) form a helical membrane-spanning segment. Over 157–169 (NHACHSIITRGAS) the chain is Cytoplasmic. Residues 170–190 (VQLVFGFEYAILMTMVLTTFI) traverse the membrane as a helical segment. Topologically, residues 191–212 (KYTLHTIDLQSENPWDNKAVYM) are lumenal. A helical transmembrane segment spans residues 213-235 (LYTELFTGFIKVLLYMAFMTIMI). Positions 236 to 270 (KVHTFPLFAIRPMYLAMRQFKKAVTDAIMSRRAIR) are interaction with p53/TP53. Residues 236–625 (KVHTFPLFAI…GNLLKLASVN (390 aa)) are Cytoplasmic-facing. Cysteine 291, cysteine 294, cysteine 307, histidine 309, histidine 312, cysteine 315, cysteine 326, and cysteine 329 together coordinate Zn(2+). Residues 291 to 330 (CIICREEMVTGAKKLPCNHIFHSSCLRSWFQRQQTCPTCR) form an RING-type; atypical zinc finger. 4 disordered regions span residues 337–361 (SQPN…NAPI), 390–434 (PPPA…SAAP), 462–487 (FMSS…LEQE), and 523–625 (LSPP…ASVN). Positions 342 to 361 (TPAPPAAQAPAPPAPANAPI) are enriched in pro residues. The segment covering 423 to 434 (AQSTAEAASAAP) has biased composition (low complexity). A compositionally biased stretch (pro residues) spans 462-471 (FMSSMPPPPS). Over residues 523–564 (LSPPRSETNTGETSESANVESSPSTANTETAGQEIQSQSGES) the composition is skewed to polar residues.

This sequence belongs to the HRD1 family. As to quaternary structure, homodimer.

It localises to the endoplasmic reticulum membrane. It catalyses the reaction S-ubiquitinyl-[E2 ubiquitin-conjugating enzyme]-L-cysteine + [acceptor protein]-L-lysine = [E2 ubiquitin-conjugating enzyme]-L-cysteine + N(6)-ubiquitinyl-[acceptor protein]-L-lysine.. It functions in the pathway protein modification; protein ubiquitination. Functionally, E3 ubiquitin-protein ligase which accepts ubiquitin specifically from endoplasmic reticulum-associated UBC7 E2 ligase and transfers it to substrates, promoting their degradation. Component of the endoplasmic reticulum quality control (ERQC) system also called ER-associated degradation (ERAD) involved in ubiquitin-dependent degradation of misfolded endoplasmic reticulum proteins. Also promotes the degradation of normal but naturally short-lived proteins. Protects cells from ER stress-induced apoptosis. Sequesters p53 in the cytoplasm and promotes its degradation, thereby negatively regulating its biological function in transcription, cell cycle regulation and apoptosis. In Danio rerio (Zebrafish), this protein is E3 ubiquitin-protein ligase synoviolin (syvn1).